The sequence spans 394 residues: MTKPQGIAVLGATGSVGCNTLDVVARHPERYRVVALTAHRQLDKLFEQARRFCPDYLVVADADAAARLRARLAEAGLRSEVLHGADALVQVAALPEVDAVMASIVGAAGLPSALAAARAGKRILLANKESLVVAGRLFMDAVRASGSALLPVDSEHSAIFQSLPADYAGNPDGAGVRKIILTASGGPFRNRPAADLAHVTPDEACRHPNWSMGRKISVDSATLMNKGLEVIEARWLFNVPPSRIEVAVHPQSVIHSMVQYRDGSVMAQLGSPDMRTPIACALAWPERIDAGVEPMDFFSLSDLTFEKPDLERFPCLQLAFDALEMGGDAPAVLNAANEVAVAAFLAGRLRFVDIPRVVAASLSGVSCAASDSLEGLLARDEEARRFAEGGVAAC.

Threonine 13, glycine 14, serine 15, valine 16, arginine 40, glutamine 41, and asparagine 127 together coordinate NADPH. Residue lysine 128 participates in 1-deoxy-D-xylulose 5-phosphate binding. Glutamate 129 contacts NADPH. Aspartate 153 contributes to the Mn(2+) binding site. 4 residues coordinate 1-deoxy-D-xylulose 5-phosphate: serine 154, glutamate 155, serine 184, and histidine 207. A Mn(2+)-binding site is contributed by glutamate 155. NADPH is bound at residue glycine 213. Serine 220, asparagine 225, lysine 226, and glutamate 229 together coordinate 1-deoxy-D-xylulose 5-phosphate. Glutamate 229 contacts Mn(2+).

Belongs to the DXR family. Mg(2+) serves as cofactor. Mn(2+) is required as a cofactor.

The enzyme catalyses 2-C-methyl-D-erythritol 4-phosphate + NADP(+) = 1-deoxy-D-xylulose 5-phosphate + NADPH + H(+). It functions in the pathway isoprenoid biosynthesis; isopentenyl diphosphate biosynthesis via DXP pathway; isopentenyl diphosphate from 1-deoxy-D-xylulose 5-phosphate: step 1/6. Its function is as follows. Catalyzes the NADPH-dependent rearrangement and reduction of 1-deoxy-D-xylulose-5-phosphate (DXP) to 2-C-methyl-D-erythritol 4-phosphate (MEP). The polypeptide is 1-deoxy-D-xylulose 5-phosphate reductoisomerase (Chromobacterium violaceum (strain ATCC 12472 / DSM 30191 / JCM 1249 / CCUG 213 / NBRC 12614 / NCIMB 9131 / NCTC 9757 / MK)).